The chain runs to 521 residues: GRAS family protein RAD1 (521 aa).

The GRAS domain occupies 137-520 (DGSCADGMRL…KPIVAVSCWK (384 aa)). Residues 144–212 (MRLVQLLIAC…PIGNNSAGSD (69 aa)) are leucine repeat I (LRI). Residues 231–301 (FKLVYENCPH…HRVRRLRITA (71 aa)) form a VHIID region. The VHIID motif lies at 262–266 (LHVVD). The tract at residues 311-343 (VIGEELSIYAKNLGIHLEFSIVEKNLENLKPKD) is leucine repeat II (LRII). The segment at 352 to 443 (LVVNSILQLH…QFYFAEEIKN (92 aa)) is PFYRE. Residues 446 to 520 (SCEGPLRMER…KPIVAVSCWK (75 aa)) are SAW.

It belongs to the GRAS family. Interacts with RAM1. Interacts with NSP2.

The protein localises to the nucleus. In terms of biological role, transcription factor acting as a regulator of arbuscular mycorrhiza (AM)-related genes (e.g. STR). Required for the morphogenesis of arbuscules upon symbiosis with AM fungi (e.g. Glomus versiforme). Also involved in restricting mycorrhizal colonization of the root meristem. The sequence is that of GRAS family protein RAD1 from Medicago truncatula (Barrel medic).